Reading from the N-terminus, the 231-residue chain is Ribose-5-phosphate isomerase A (231 aa).

Substrate is bound by residues 32–35, 85–88, and 98–101; these read TGST, DGAD, and KGGG. Residue Glu-107 is the Proton acceptor of the active site. Residue Lys-125 participates in substrate binding.

The protein belongs to the ribose 5-phosphate isomerase family. As to quaternary structure, homodimer.

It carries out the reaction aldehydo-D-ribose 5-phosphate = D-ribulose 5-phosphate. It functions in the pathway carbohydrate degradation; pentose phosphate pathway; D-ribose 5-phosphate from D-ribulose 5-phosphate (non-oxidative stage): step 1/1. Catalyzes the reversible conversion of ribose-5-phosphate to ribulose 5-phosphate. This is Ribose-5-phosphate isomerase A from Paraburkholderia phytofirmans (strain DSM 17436 / LMG 22146 / PsJN) (Burkholderia phytofirmans).